We begin with the raw amino-acid sequence, 161 residues long: SUZ RNA-binding domain-containing (161 aa).

Residues 1 to 17 show a composition bias toward acidic residues; the sequence is MDDEEVAESWEEAADSG. The disordered stretch occupies residues 1–161; that stretch reads MDDEEVAESW…GTQGFHHQRR (161 aa). Residues 18–35 show a composition bias toward basic and acidic residues; it reads EMERRLEEKLRISQKERL. The region spanning 42–111 is the SUZ domain; it reads RSPMRTAIVI…ARKRILGSAT (70 aa). Residues 70 to 91 are compositionally biased toward polar residues; it reads PSSNGSLGSSALQTRPSPQVKS. Basic and acidic residues-rich tracts occupy residues 93–104 and 116–126; these read AQREAEYAEARK and PQERPNSDRSP. The region spanning 116–160 is the SUZ-C domain; it reads PQERPNSDRSPRGSSHTLSEENRPGNHVVRQPAGPDGTQGFHHQR. A Phosphoserine modification is found at Ser-125.

This sequence belongs to the SZRD1 family.

In Danio rerio (Zebrafish), this protein is SUZ RNA-binding domain-containing (szrd1).